A 195-amino-acid chain; its full sequence is MPYGTRYPTLAFHTGGVGESDDGMPPQPFETFCYDSALLQAKIENFNIVPYTSVLPKELFGNILPVDQCTKFFKHGAVLEVIMAGRGATVTDGTQAIATGVGICWGKDKNGELIRGWAAEYVEFFPTWIDDEIAESHAKMWLKKSLQHELDLRSISKHSEFQYFHNYINIRKKFGFCLTALGFLNFENAAPAVIQ.

Pyruvic acid (Ser) is present on Ser53.

This sequence belongs to the pyruvoyl-dependent arginine decarboxylase family. As to quaternary structure, trimer of an alpha-beta dimer. It depends on pyruvate as a cofactor.

The protein resides in the cytoplasm. It carries out the reaction L-arginine + H(+) = agmatine + CO2. In terms of biological role, part of the AaxABC system, catalyzes the decarboxylation of L-arginine. The arginine uptake by the bacterium in the macrophage may be a virulence factor against the host innate immune response. This Chlamydia trachomatis serovar D (strain ATCC VR-885 / DSM 19411 / UW-3/Cx) protein is Pyruvoyl-dependent arginine decarboxylase AaxB (aaxB).